A 784-amino-acid polypeptide reads, in one-letter code: Toll-like receptor 2 (784 aa).

An N-terminal signal peptide occupies residues 1–20 (MPRALWTAWVWAVIILSMEG). At 21-587 (ASHQASSLSC…ARLSLSECHR (567 aa)) the chain is on the extracellular side. A disulfide bond links cysteine 30 and cysteine 36. LRR repeat units follow at residues 54–77 (VKSL…RCVN), 78–101 (LKTL…HLRN), 102–125 (LEYL…SLYA), 126–150 (LKFL…HLPN), 151–175 (LRTL…GLIF), 176–199 (LEEL…SIQN), 200–223 (ISHL…IVSS), 224–250 (LDCL…MNTS), 251–278 (VKKL…YVSG), 279–308 (ILEV…HLGN), 309–337 (VETL…LTGK), 338–361 (VKRV…HLKS), 362–388 (LEYL…AWPF), 389–414 (LQTL…TLKN), 415–437 (LNNL…WPGK), 438–457 (MKQL…CLPQ), 458–478 (TLEI…ILPQ), 479–500 (LKEL…FLPV), and 501–524 (LSVM…SFPQ). An N-linked (GlcNAc...) asparagine glycan is attached at asparagine 114. N-linked (GlcNAc...) asparagine glycosylation is present at asparagine 199. Residue asparagine 248 is glycosylated (N-linked (GlcNAc...) asparagine). The cysteines at positions 353 and 382 are disulfide-linked. An intrachain disulfide couples cysteine 432 to cysteine 454. N-linked (GlcNAc...) asparagine glycosylation occurs at asparagine 442. Positions 525–579 (LKALEAGGNNFICSCDFLSFTQGQQALARVLVDWPDGYRCDAPSHVRGQRVQDAR) constitute an LRRCT domain. Residues 588-608 (AAVVSAVCCALFLLLLLTGVL) traverse the membrane as a helical segment. The Cytoplasmic portion of the chain corresponds to 609-784 (CHRFHGLWYM…WLNLRAAIRS (176 aa)). The TIR domain occupies 639–782 (LCYDAFVSYS…AFWLNLRAAI (144 aa)). Residue lysine 754 forms a Glycyl lysine isopeptide (Lys-Gly) (interchain with G-Cter in ubiquitin) linkage. The short motif at 761 to 778 (YLEWPTDETQQEAFWLNL) is the ATG16L1-binding motif element.

Belongs to the Toll-like receptor family. As to quaternary structure, interacts with LY96, TLR1 and TLR6 (via extracellular domain). TLR2 seems to exist in heterodimers with either TLR1 or TLR6 before stimulation by the ligand. The heterodimers form bigger oligomers in response to their corresponding ligands as well as further heterotypic associations with other receptors such as CD14 and/or CD36. Binds MYD88 (via TIR domain). Interacts with TICAM1. Interacts with CNPY3. Interacts with ATG16L1. Interacts with PPP1R11. Interacts with TICAM2. Interacts with TIRAP. Post-translationally, ubiquitinated at Lys-754 by PPP1R11, leading to its degradation. Deubiquitinated by USP2. Glycosylation of Asn-442 is critical for secretion of the N-terminal ectodomain of TLR2.

It localises to the membrane. It is found in the cytoplasmic vesicle. The protein resides in the phagosome membrane. Its subcellular location is the membrane raft. Functionally, cooperates with LY96 to mediate the innate immune response to bacterial lipoproteins and other microbial cell wall components. Cooperates with TLR1 or TLR6 to mediate the innate immune response to bacterial lipoproteins or lipopeptides. Acts via MYD88 and TRAF6, leading to NF-kappa-B activation, cytokine secretion and the inflammatory response. May also promote apoptosis in response to lipoproteins. Forms activation clusters composed of several receptors depending on the ligand, these clusters trigger signaling from the cell surface and subsequently are targeted to the Golgi in a lipid-raft dependent pathway. Forms the cluster TLR2:TLR6:CD14:CD36 in response to diacylated lipopeptides and TLR2:TLR1:CD14 in response to triacylated lipopeptides. The sequence is that of Toll-like receptor 2 (TLR2) from Capra hircus (Goat).